The chain runs to 403 residues: MTKIEKIVLSYSGGLDTSIILKWLQETYGCEVVTFTADLGQGEELEPARAKAEMSGVKDIRIVDLREEFVSDFVFPMLRANALYEGQYLLGSSIARPLIAKHLVGIAREVGADAVAHGATGKGNDQIRFELAVNALDPSIKVIAPWRQWNIRSRLQLSEYAEKHRIPVPSDKRGEAPFSIDANLLHTSTEGKSLENPAEVAPDHVYQRTVDPVDAPDTPEIITVGFERGDPVSVNGKAMTPAALLTELNGLGGRHGVGRLDLVENRFIGMKSRGIYETPGGTILLAAHRGIESITLDRAAAHLKDEIMPRYAELIYNGFWFAPEREMLQALIDHSQAFVSGEVTLRLYKGSASVISRASPCSLYSADLVTFEESTIAFDHHDAEGFIRLNGLRLRSWAARNGR.

ATP-binding positions include 10-18 and alanine 37; that span reads SYSGGLDTS. Tyrosine 88 and serine 93 together coordinate L-citrulline. Glycine 118 provides a ligand contact to ATP. Residues threonine 120, asparagine 124, and aspartate 125 each coordinate L-aspartate. Asparagine 124 provides a ligand contact to L-citrulline. L-citrulline-binding residues include arginine 128, serine 179, serine 188, glutamate 264, and tyrosine 276.

Belongs to the argininosuccinate synthase family. Type 1 subfamily. As to quaternary structure, homotetramer.

It is found in the cytoplasm. It catalyses the reaction L-citrulline + L-aspartate + ATP = 2-(N(omega)-L-arginino)succinate + AMP + diphosphate + H(+). It participates in amino-acid biosynthesis; L-arginine biosynthesis; L-arginine from L-ornithine and carbamoyl phosphate: step 2/3. The protein is Argininosuccinate synthase 1 of Rhizobium johnstonii (strain DSM 114642 / LMG 32736 / 3841) (Rhizobium leguminosarum bv. viciae).